A 1217-amino-acid chain; its full sequence is Nuclear matrix constituent protein 1 (1217 aa).

Over residues 1-14 the composition is skewed to polar residues; that stretch reads MLTPQRSAWSLKSK. The disordered stretch occupies residues 1 to 45; that stretch reads MLTPQRSAWSLKSKVSSEKPRSKGKGITKNLDSAATPFPPLGLLN. Residues 159–746 are a coiled coil; it reads VTDLEKALRE…KNQRAEFIKE (588 aa). The span at 892 to 904 shows a compositional bias: low complexity; sequence SEDAAANDNNPAA. Disordered stretches follow at residues 892–969, 981–1057, 1087–1117, and 1152–1217; these read SEDA…VVDD, EEAK…VQAP, VQTK…HKVT, and ISEM…FFTT. The span at 947-960 shows a compositional bias: basic residues; sequence STRRGRGGKTVRRT. Composition is skewed to polar residues over residues 986–1007 and 1087–1103; these read SSQQ…TSNT and VQTK…NQIS. The segment covering 1173 to 1186 has biased composition (low complexity); it reads EEPATPSSGSSTSG. A compositionally biased stretch (acidic residues) spans 1189-1200; the sequence is GNDDDMDDDDEE.

This sequence belongs to the CRWN family.

It is found in the nucleus matrix. The protein localises to the nucleus lamina. Functionally, architectural component of nuclear structure that plays different roles in controlling nuclear size and morphology. Involved in the organization of multimeric complexes in the peripheral nucleoskeleton. In Allium cepa (Onion), this protein is Nuclear matrix constituent protein 1.